Reading from the N-terminus, the 765-residue chain is Palmitoyltransferase ZDHHC8 (765 aa).

Over 1 to 13 (MPRSPGTRLKPAK) the chain is Cytoplasmic. Residues 14 to 34 (YIPVATAAALLVGSSTLFFVF) form a helical membrane-spanning segment. Over 35–52 (TCPWLTRAVSPAVPVYNG) the chain is Lumenal. A helical membrane pass occupies residues 53 to 73 (IIFLFVLANFSMATFMDPGVF). Over 74–148 (PRADEDEDKE…NCIGRRNYRY (75 aa)) the chain is Cytoplasmic. Residues 104–154 (KWCATCHFYRPPRCSHCSVCDNCVEDFDHHCPWVNNCIGRRNYRYFFLFLL) enclose the DHHC domain. The S-palmitoyl cysteine intermediate role is filled by C134. A helical transmembrane segment spans residues 149-169 (FFLFLLSLSAHMVGVVAFGLV). The Lumenal segment spans residues 170 to 190 (YVLNHAEGLGAAHTTITMAVM). The helical transmembrane segment at 191–211 (CVAGLFFIPVIGLTGFHVVLV) threads the bilayer. Over 212–765 (TRGRTTNEQV…VGGTTYEISV (554 aa)) the chain is Cytoplasmic. The disordered stretch occupies residues 293 to 352 (GLGRSKSKGSLDRLDEKPLDLGPPLPPKIEAGTFSSDLQTPRPGSAESALSVQRTSPPTP). The segment covering 301–311 (GSLDRLDEKPL) has biased composition (basic and acidic residues). Position 337 is a phosphoserine (S337). Omega-N-methylarginine is present on R441. Residues 509-540 (LHPGATGDPPRPLPRSFSPVLGPRPREPSPVR) form a disordered region. S606, S627, S675, S682, S725, and S743 each carry phosphoserine. The segment at 613–747 (GPGFGGARNP…PGPSASPTRH (135 aa)) is disordered. The span at 622 to 653 (PALQTSLSSLSSSVSRAPRTSSSSLQADQASS) shows a compositional bias: low complexity.

It belongs to the DHHC palmitoyltransferase family. ERF2/ZDHHC9 subfamily. Widely expressed.

Its subcellular location is the golgi apparatus membrane. The protein resides in the mitochondrion membrane. It catalyses the reaction L-cysteinyl-[protein] + hexadecanoyl-CoA = S-hexadecanoyl-L-cysteinyl-[protein] + CoA. Functionally, palmitoyltransferase that catalyzes the addition of palmitate onto various protein substrates and therefore functions in several unrelated biological processes. Through the palmitoylation of ABCA1 regulates the localization of the transporter to the plasma membrane and thereby regulates its function in cholesterol and phospholipid efflux. Could also pamitoylate the D(2) dopamine receptor DRD2 and regulate its stability and localization to the plasma membrane. Could also play a role in glutamatergic transmission. Its function is as follows. (Microbial infection) Able to palmitoylate SARS coronavirus-2/SARS-CoV-2 spike protein following its synthesis in the endoplasmic reticulum (ER). In the infected cell, promotes spike biogenesis by protecting it from premature ER degradation, increases half-life and controls the lipid organization of its immediate membrane environment. Once the virus has formed, spike palmitoylation controls fusion with the target cell. The polypeptide is Palmitoyltransferase ZDHHC8 (Homo sapiens (Human)).